Reading from the N-terminus, the 346-residue chain is KH domain-containing, RNA-binding, signal transduction-associated protein 2 (346 aa).

The KH domain occupies 65 to 131 (LIPVQQYPKF…AKYAHLSNDL (67 aa)). The tract at residues 175 to 291 (LSYLNGSDDP…SYESYDDNYS (117 aa)) is disordered. The span at 195–224 (LRLTSTASPRGRGSAAPPAPPGRGAAAPRG) shows a compositional bias: low complexity. Acidic residues predominate over residues 268–287 (YGYDDGYDGEYDDQSYESYD).

The protein belongs to the KHDRBS family.

It is found in the nucleus. RNA-binding protein that plays a role in the regulation of alternative splicing. The protein is KH domain-containing, RNA-binding, signal transduction-associated protein 2 (khdrbs2) of Danio rerio (Zebrafish).